Reading from the N-terminus, the 331-residue chain is uncharacterized protein (331 aa).

5 Pentapeptide repeat domains span residues 50 to 89 (ENLQNADLSGFTLISVDFERTNLIGSNLQRTFLTKARLGH), 90 to 129 (CQMNWADLTYAKLNQADLSHADLTKASLYGAFAVKTNFKG), 140 to 179 (ANLRGANLEQTNLTGANLFAANLREANFQKADFSWANLQE), 185 to 224 (ANLRDARLWATDLRRAFMKEMDLSALSLHGLAMDGAKLTG), and 230 to 269 (TNLSHSSLRGANLRGADLTGANLTGVDLTGADLMGANLTQ).

This is an uncharacterized protein from Synechocystis sp. (strain ATCC 27184 / PCC 6803 / Kazusa).